The chain runs to 455 residues: Membrane-bound lytic murein transglycosylase F (455 aa).

The signal sequence occupies residues 1 to 21 (MPKSAVSLFAILLLAASVITA). The non-LT domain stretch occupies residues 22 to 264 (CSPQTRPDAM…HIKEQHFGHV (243 aa)). Residues 265–455 (KQFNYVTTSL…LKYLDEQGRL (191 aa)) form an LT domain region. The active site involves Glu309.

It in the N-terminal section; belongs to the bacterial solute-binding protein 3 family. The protein in the C-terminal section; belongs to the transglycosylase Slt family.

The protein resides in the cell outer membrane. It catalyses the reaction Exolytic cleavage of the (1-&gt;4)-beta-glycosidic linkage between N-acetylmuramic acid (MurNAc) and N-acetylglucosamine (GlcNAc) residues in peptidoglycan, from either the reducing or the non-reducing ends of the peptidoglycan chains, with concomitant formation of a 1,6-anhydrobond in the MurNAc residue.. Functionally, murein-degrading enzyme that degrades murein glycan strands and insoluble, high-molecular weight murein sacculi, with the concomitant formation of a 1,6-anhydromuramoyl product. Lytic transglycosylases (LTs) play an integral role in the metabolism of the peptidoglycan (PG) sacculus. Their lytic action creates space within the PG sacculus to allow for its expansion as well as for the insertion of various structures such as secretion systems and flagella. In Idiomarina loihiensis (strain ATCC BAA-735 / DSM 15497 / L2-TR), this protein is Membrane-bound lytic murein transglycosylase F.